Here is a 215-residue protein sequence, read N- to C-terminus: Probable transaldolase (215 aa).

Catalysis depends on Lys83, which acts as the Schiff-base intermediate with substrate.

Belongs to the transaldolase family. Type 3B subfamily.

It is found in the cytoplasm. It carries out the reaction D-sedoheptulose 7-phosphate + D-glyceraldehyde 3-phosphate = D-erythrose 4-phosphate + beta-D-fructose 6-phosphate. It functions in the pathway carbohydrate degradation; pentose phosphate pathway; D-glyceraldehyde 3-phosphate and beta-D-fructose 6-phosphate from D-ribose 5-phosphate and D-xylulose 5-phosphate (non-oxidative stage): step 2/3. Functionally, transaldolase is important for the balance of metabolites in the pentose-phosphate pathway. The polypeptide is Probable transaldolase (Methanococcus maripaludis (strain C6 / ATCC BAA-1332)).